The following is a 445-amino-acid chain: Tubulin beta chain (445 aa).

The GTP site is built by glutamine 11, glutamate 69, serine 138, glycine 142, threonine 143, glycine 144, asparagine 204, and asparagine 226. A Mg(2+)-binding site is contributed by glutamate 69. The disordered stretch occupies residues 426–445 (QDATAEEEGEFEEEEGDVEA). The span at 429 to 445 (TAEEEGEFEEEEGDVEA) shows a compositional bias: acidic residues.

Belongs to the tubulin family. In terms of assembly, dimer of alpha and beta chains. A typical microtubule is a hollow water-filled tube with an outer diameter of 25 nm and an inner diameter of 15 nM. Alpha-beta heterodimers associate head-to-tail to form protofilaments running lengthwise along the microtubule wall with the beta-tubulin subunit facing the microtubule plus end conferring a structural polarity. Microtubules usually have 13 protofilaments but different protofilament numbers can be found in some organisms and specialized cells. Interacts with DCX/apicortin; the interaction stabilizes microtubule assembly. Mg(2+) is required as a cofactor.

It is found in the cytoplasm. It localises to the cytoskeleton. In terms of biological role, tubulin is the major constituent of microtubules, a cylinder consisting of laterally associated linear protofilaments composed of alpha- and beta-tubulin heterodimers. Microtubules grow by the addition of GTP-tubulin dimers to the microtubule end, where a stabilizing cap forms. Below the cap, tubulin dimers are in GDP-bound state, owing to GTPase activity of alpha-tubulin. The polypeptide is Tubulin beta chain (Plasmodium falciparum (isolate 3D7)).